Here is a 576-residue protein sequence, read N- to C-terminus: Vesicular glutamate transporter 1 (576 aa).

The Cytoplasmic segment spans residues 1–63 (MEFRKEEFKK…CTCFGLPRRY (63 aa)). The helical transmembrane segment at 64–84 (IIAIMSGLGFCISFGIRCNLG) threads the bilayer. The Vesicular segment spans residues 85 to 116 (VAIVSMVNNNTVYKGNKLVIEQAQFNWDPETV). N-linked (GlcNAc...) asparagine glycosylation occurs at N93. Residues 117 to 137 (GMIHGSFFWGYIVTQIPGGYI) traverse the membrane as a helical segment. At 138–140 (CQK) the chain is on the cytoplasmic side. The chain crosses the membrane as a helical span at residues 141-161 (FAANRVFGFAIVATSTLNMLI). Residues 162–168 (PSAARVH) are Vesicular-facing. Residues 169-189 (FACVICVRILQGLVEGVTYPA) form a helical membrane-spanning segment. The Cytoplasmic segment spans residues 190-208 (CHGIWSKWAPPLERSRLAT). The helical transmembrane segment at 209-229 (TAFCGSYAGAVVAMPLAGVLV) threads the bilayer. Over 230 to 236 (QYSGWSS) the chain is Vesicular. Residues 237–257 (VFYVYGSFGITWYMFWILVSY) traverse the membrane as a helical segment. At 258 to 297 (ESPAQHPTISEEERKYIEESIGESTGFMNPMAKFKAPWRK) the chain is on the cytoplasmic side. The helical transmembrane segment at 298 to 320 (FFTSMPVYAIIVANFCRSWTFYL) threads the bilayer. Topologically, residues 321–341 (LLISQPAYFEEVFGFAISKVG) are vesicular. A helical membrane pass occupies residues 342–362 (LLSALPHLVMTIIVPIGGQIA). Over 363-378 (DFLRTKRIMSTTNVRK) the chain is Cytoplasmic. A helical membrane pass occupies residues 379 to 399 (MMNCGGFGMEATLLLVVGYSH). Residues 400–401 (SR) lie on the Vesicular side of the membrane. A helical membrane pass occupies residues 402-422 (GVAISFLVLAVGFSGFAISGF). The Cytoplasmic segment spans residues 423–435 (NVNHLDIAPRYAS). A helical membrane pass occupies residues 436–456 (ILMGISNGVGTLSGMVCPLIV). Residues 457-469 (GAMTKHKTREEWQ) are Vesicular-facing. A helical membrane pass occupies residues 470–490 (YVFLIASLVHYGGVVFYGIFA). Topologically, residues 491–576 (SGEKQPWAEP…YGTVAERDLS (86 aa)) are cytoplasmic. Positions 517–552 (ADESEEQTQAHGGYGSYGATQTTSQQNGGWATDWEK) are disordered. Positions 534-545 (GATQTTSQQNGG) are enriched in polar residues.

The protein belongs to the major facilitator superfamily. Sodium/anion cotransporter family. VGLUT subfamily.

The protein resides in the cytoplasmic vesicle. It localises to the secretory vesicle. It is found in the synaptic vesicle membrane. The protein localises to the cell membrane. Its subcellular location is the synapse. The protein resides in the synaptosome. It carries out the reaction L-glutamate(out) = L-glutamate(in). The catalysed reaction is chloride(in) = chloride(out). The enzyme catalyses 3 Na(+)(out) + phosphate(out) = 3 Na(+)(in) + phosphate(in). It catalyses the reaction phosphate(in) = phosphate(out). It carries out the reaction K(+)(in) + H(+)(out) = K(+)(out) + H(+)(in). Its activity is regulated as follows. Chloride channel activity is allosterically activated by lumenal H(+) and Cl(-) leading to synaptic vesicles acidification. The L-glutamate transport activity is allosterically activated by lumenal H(+) and Cl(-). The allosteric activation by H(+) efficiently prevents non-vesicular efflux across the plasma membrane, thereby restricting L-glutamate transport activity to acidic membranes such as synaptic vesicles. Functionally, multifunctional transporter that transports L-glutamate as well as multiple ions such as chloride, proton, potassium, sodium and phosphate. At the synaptic vesicle membrane, mainly functions as an uniporter which transports preferentially L-glutamate but also phosphate from the cytoplasm into synaptic vesicles at presynaptic nerve terminals of excitatory neural cells. The L-glutamate or phosphate uniporter activity is electrogenic and is driven by the proton electrochemical gradient, mainly by the electrical gradient established by the vacuolar H(+)-ATPase across the synaptic vesicle membrane. In addition, functions as a chloride channel that allows a chloride permeation through the synaptic vesicle membrane that affects the proton electrochemical gradient and promotes synaptic vesicles acidification. Moreover, may function as a K(+)/H(+) antiport allowing to maintain the electrical gradient and to decrease chemical gradient and therefore sustain vesicular glutamate uptake. The vesicular K(+)/H(+) antiport activity is electroneutral. At the plasma membrane, following exocytosis, functions as a symporter of Na(+) and phosphate from the extracellular space to the cytoplasm allowing synaptic phosphate homeostasis regulation. The symporter activity is driven by an inside negative membrane potential and is electrogenic. Is necessary for synaptic signaling of visual-evoked responses from photoreceptors. This is Vesicular glutamate transporter 1 from Xenopus laevis (African clawed frog).